A 450-amino-acid chain; its full sequence is UDP-N-acetylmuramoylalanine--D-glutamate ligase (450 aa).

115–121 (GTNGKTT) contributes to the ATP binding site.

The protein belongs to the MurCDEF family.

It localises to the cytoplasm. The catalysed reaction is UDP-N-acetyl-alpha-D-muramoyl-L-alanine + D-glutamate + ATP = UDP-N-acetyl-alpha-D-muramoyl-L-alanyl-D-glutamate + ADP + phosphate + H(+). Its pathway is cell wall biogenesis; peptidoglycan biosynthesis. Cell wall formation. Catalyzes the addition of glutamate to the nucleotide precursor UDP-N-acetylmuramoyl-L-alanine (UMA). The polypeptide is UDP-N-acetylmuramoylalanine--D-glutamate ligase (Lachnospira eligens (strain ATCC 27750 / DSM 3376 / VPI C15-48 / C15-B4) (Eubacterium eligens)).